Consider the following 163-residue polypeptide: MALNLQDKQAIVAEVNEAAKGALSAVIADSRGVTVDKMTELRKVARENGVSMRVVRNTLLRRAVEGTEFECLKDTFVGPTLIAFSTEHPGAAARLFKDFAKANDKFEIKGAAFEGKIQDVEFLATLPTYDEAIARLMGTMKEAAAGKLVRTLAALRDKLQEAA.

The protein belongs to the universal ribosomal protein uL10 family. In terms of assembly, part of the ribosomal stalk of the 50S ribosomal subunit. The N-terminus interacts with L11 and the large rRNA to form the base of the stalk. The C-terminus forms an elongated spine to which L12 dimers bind in a sequential fashion forming a multimeric L10(L12)X complex.

Functionally, forms part of the ribosomal stalk, playing a central role in the interaction of the ribosome with GTP-bound translation factors. The protein is Large ribosomal subunit protein uL10 (rplJ) of Pasteurella multocida (strain Pm70).